The chain runs to 78 residues: Large ribosomal subunit protein bL28 (78 aa).

The disordered stretch occupies residues 1 to 23 (MSRVCQVTGKKPMVGNNRSHAKN).

The protein belongs to the bacterial ribosomal protein bL28 family.

The chain is Large ribosomal subunit protein bL28 from Shewanella frigidimarina (strain NCIMB 400).